The sequence spans 345 residues: Biotin synthase (345 aa).

In terms of domain architecture, Radical SAM core spans 66 to 293 (NTVQLSTLLS…RAMVRLSAGR (228 aa)). Residues C81, C85, and C88 each contribute to the [4Fe-4S] cluster site. [2Fe-2S] cluster-binding residues include C125, C156, C216, and R288.

Belongs to the radical SAM superfamily. Biotin synthase family. In terms of assembly, homodimer. Requires [4Fe-4S] cluster as cofactor. [2Fe-2S] cluster is required as a cofactor.

The enzyme catalyses (4R,5S)-dethiobiotin + (sulfur carrier)-SH + 2 reduced [2Fe-2S]-[ferredoxin] + 2 S-adenosyl-L-methionine = (sulfur carrier)-H + biotin + 2 5'-deoxyadenosine + 2 L-methionine + 2 oxidized [2Fe-2S]-[ferredoxin]. Its pathway is cofactor biosynthesis; biotin biosynthesis; biotin from 7,8-diaminononanoate: step 2/2. Catalyzes the conversion of dethiobiotin (DTB) to biotin by the insertion of a sulfur atom into dethiobiotin via a radical-based mechanism. The chain is Biotin synthase from Cupriavidus metallidurans (strain ATCC 43123 / DSM 2839 / NBRC 102507 / CH34) (Ralstonia metallidurans).